The following is a 194-amino-acid chain: Interferon alpha (194 aa).

The N-terminal stretch at 1–23 (MALPSSFLVALVALGCNSVCSLG) is a signal peptide. Disulfide bonds link C24–C123 and C52–C166. Residue N102 is glycosylated (N-linked (GlcNAc...) asparagine).

Belongs to the alpha/beta interferon family.

The protein localises to the secreted. Its function is as follows. Produced by macrophages, IFN-alpha have antiviral activities. Interferon stimulates the production of two enzymes: a protein kinase and an oligoadenylate synthetase. This chain is Interferon alpha, found in Felis catus (Cat).